A 297-amino-acid polypeptide reads, in one-letter code: Acetaldehyde dehydrogenase (297 aa).

15–18 (SGSI) lines the NAD(+) pocket. C130 serves as the catalytic Acyl-thioester intermediate. NAD(+) contacts are provided by residues 162–170 (SAGIATREN) and N272.

Belongs to the acetaldehyde dehydrogenase family.

It carries out the reaction acetaldehyde + NAD(+) + CoA = acetyl-CoA + NADH + H(+). This chain is Acetaldehyde dehydrogenase (mhpF), found in Burkholderia pseudomallei (strain K96243).